The sequence spans 93 residues: Large ribosomal subunit protein uL23cz/uL23cy (93 aa).

This sequence belongs to the universal ribosomal protein uL23 family. As to quaternary structure, part of the 50S ribosomal subunit.

The protein resides in the plastid. The protein localises to the chloroplast. Functionally, binds to 23S rRNA. In Oryza nivara (Indian wild rice), this protein is Large ribosomal subunit protein uL23cz/uL23cy (rpl23-A).